Here is an 89-residue protein sequence, read N- to C-terminus: Signal recognition particle 19 kDa protein (89 aa).

Belongs to the SRP19 family. Part of the signal recognition particle protein translocation system, which is composed of SRP and FtsY. Archaeal SRP consists of a 7S RNA molecule of 300 nucleotides and two protein subunits: SRP54 and SRP19.

It localises to the cytoplasm. In terms of biological role, involved in targeting and insertion of nascent membrane proteins into the cytoplasmic membrane. Binds directly to 7S RNA and mediates binding of the 54 kDa subunit of the SRP. This Methanococcus maripaludis (strain DSM 14266 / JCM 13030 / NBRC 101832 / S2 / LL) protein is Signal recognition particle 19 kDa protein.